An 88-amino-acid polypeptide reads, in one-letter code: MITMSRRAESRQIEANEVLDIRGEVCPFTFIETKLKLEEMKSGEILRVIIDHEPAVRDVPRSVEQEGHEVLSVEKVGEKEWSILIKKK.

Catalysis depends on cysteine 26, which acts as the Cysteine persulfide intermediate.

The protein belongs to the sulfur carrier protein TusA family.

The polypeptide is Putative sulfur carrier protein AF_0554 (Archaeoglobus fulgidus (strain ATCC 49558 / DSM 4304 / JCM 9628 / NBRC 100126 / VC-16)).